A 70-amino-acid polypeptide reads, in one-letter code: Beta-defensin 107 (70 aa).

The N-terminal stretch at Met1–Thr26 is a signal peptide. 2 disulfides stabilise this stretch: Cys41–Cys55 and Cys45–Cys64.

This sequence belongs to the beta-defensin family. Specifically expressed in testis.

The protein resides in the secreted. Functionally, has antibacterial activity. The sequence is that of Beta-defensin 107 (DEFB107A) from Homo sapiens (Human).